A 20-amino-acid polypeptide reads, in one-letter code: WLSGVDKIRGVNLGSAFIIE.

This sequence belongs to the glycosyl hydrolase 5 (cellulase A) family.

The protein localises to the secreted. It is found in the extracellular space. The catalysed reaction is Random hydrolysis of (1-&gt;6)-linkages in (1-&gt;6)-beta-D-glucans.. Endo-1,6-beta-glucanase that has highest activity against the beta-1,6-glucan pustulan. Also active against the beta-1,6-glucan lutean. Lower activity against laminarin (beta-1,3-glucan with beta-1,6-branches). Little or no activity against gentiobiose, yeast glucan, lichenin, scleroglucan, curdlan, barley glucan, CM cellulose, HE cellulose, pachyman and pullulan. This chain is Endo-1,6-beta-glucanase, found in Acremonium sp.